Reading from the N-terminus, the 732-residue chain is Probable zinc transporter cis4 (732 aa).

A run of 12 helical transmembrane segments spans residues 52 to 72, 79 to 99, 111 to 131, 163 to 183, 189 to 209, 219 to 239, 240 to 260, 268 to 288, 350 to 370, 380 to 400, 415 to 435, and 453 to 473; these read ETLG…GLEV, FYLI…LGIY, VIIA…LGTL, YIAF…LGYF, VFYA…FYLV, LAFL…VLPL, GTIN…IFCI, IQFY…SAII, IFYF…YGLW, AIHM…TTLA, IEAL…FSIV, and LLLV…AFNH. Residues 526-547 are disordered; sequence HVSQHEHTHENSQEHHHEHNHN. Transmembrane regions (helical) follow at residues 586 to 606 and 615 to 635; these read IFLH…STIL and FDPL…LPLI.

The protein belongs to the cation diffusion facilitator (CDF) transporter (TC 2.A.4) family. SLC30A subfamily. Interacts with zrg17.

It localises to the endoplasmic reticulum membrane. The protein resides in the golgi apparatus. Its subcellular location is the cis-Golgi network membrane. Functionally, probable zinc transporter involved in Golgi membrane trafficking through the regulation of zinc homeostasis. The chain is Probable zinc transporter cis4 (cis4) from Schizosaccharomyces pombe (strain 972 / ATCC 24843) (Fission yeast).